The primary structure comprises 177 residues: ATP synthase subunit delta, chloroplastic (177 aa).

The protein belongs to the ATPase delta chain family. In terms of assembly, F-type ATPases have 2 components, F(1) - the catalytic core - and F(0) - the membrane proton channel. F(1) has five subunits: alpha(3), beta(3), gamma(1), delta(1), epsilon(1). CF(0) has four main subunits: a(1), b(1), b'(1) and c(10-14). The alpha and beta chains form an alternating ring which encloses part of the gamma chain. F(1) is attached to F(0) by a central stalk formed by the gamma and epsilon chains, while a peripheral stalk is formed by the delta, b and b' chains.

The protein localises to the plastid. It localises to the chloroplast thylakoid membrane. F(1)F(0) ATP synthase produces ATP from ADP in the presence of a proton or sodium gradient. F-type ATPases consist of two structural domains, F(1) containing the extramembraneous catalytic core and F(0) containing the membrane proton channel, linked together by a central stalk and a peripheral stalk. During catalysis, ATP synthesis in the catalytic domain of F(1) is coupled via a rotary mechanism of the central stalk subunits to proton translocation. Its function is as follows. This protein is part of the stalk that links CF(0) to CF(1). It either transmits conformational changes from CF(0) to CF(1) or is implicated in proton conduction. In Galdieria sulphuraria (Red alga), this protein is ATP synthase subunit delta, chloroplastic.